The following is a 279-amino-acid chain: Large ribosomal subunit protein uL2 (279 aa).

Disordered regions lie at residues 33 to 58 (LLAP…GGGH) and 223 to 279 (GVAM…RKRG). Composition is skewed to basic residues over residues 40-58 (KGGR…GGGH) and 269-279 (VRRRYATRKRG).

It belongs to the universal ribosomal protein uL2 family. As to quaternary structure, part of the 50S ribosomal subunit. Forms a bridge to the 30S subunit in the 70S ribosome.

Its function is as follows. One of the primary rRNA binding proteins. Required for association of the 30S and 50S subunits to form the 70S ribosome, for tRNA binding and peptide bond formation. It has been suggested to have peptidyltransferase activity; this is somewhat controversial. Makes several contacts with the 16S rRNA in the 70S ribosome. The sequence is that of Large ribosomal subunit protein uL2 from Salinispora arenicola (strain CNS-205).